Consider the following 397-residue polypeptide: Acetate kinase 2 (397 aa).

N10 is a Mg(2+) binding site. Residue K17 coordinates ATP. R90 is a binding site for substrate. D147 acts as the Proton donor/acceptor in catalysis. ATP contacts are provided by residues 207–211 (HLGNG), 281–283 (DAR), and 329–333 (GIGEN). E385 serves as a coordination point for Mg(2+).

It belongs to the acetokinase family. Homodimer. It depends on Mg(2+) as a cofactor. Mn(2+) serves as cofactor.

Its subcellular location is the cytoplasm. It catalyses the reaction acetate + ATP = acetyl phosphate + ADP. The protein operates within metabolic intermediate biosynthesis; acetyl-CoA biosynthesis; acetyl-CoA from acetate: step 1/2. Functionally, catalyzes the formation of acetyl phosphate from acetate and ATP. Can also catalyze the reverse reaction. The chain is Acetate kinase 2 from Aliivibrio fischeri (strain ATCC 700601 / ES114) (Vibrio fischeri).